Reading from the N-terminus, the 81-residue chain is Cytochrome b559 subunit alpha (81 aa).

A helical transmembrane segment spans residues 21 to 35 (VIHSVTIPSLFVGGW). H23 provides a ligand contact to heme.

This sequence belongs to the PsbE/PsbF family. In terms of assembly, heterodimer of an alpha subunit and a beta subunit. PSII is composed of 1 copy each of membrane proteins PsbA, PsbB, PsbC, PsbD, PsbE, PsbF, PsbH, PsbI, PsbJ, PsbK, PsbL, PsbM, PsbT, PsbY, PsbZ, Psb30/Ycf12, at least 3 peripheral proteins of the oxygen-evolving complex and a large number of cofactors. It forms dimeric complexes. Heme b is required as a cofactor.

It is found in the plastid. The protein resides in the chloroplast thylakoid membrane. Functionally, this b-type cytochrome is tightly associated with the reaction center of photosystem II (PSII). PSII is a light-driven water:plastoquinone oxidoreductase that uses light energy to abstract electrons from H(2)O, generating O(2) and a proton gradient subsequently used for ATP formation. It consists of a core antenna complex that captures photons, and an electron transfer chain that converts photonic excitation into a charge separation. The chain is Cytochrome b559 subunit alpha from Euglena gracilis.